Here is an 890-residue protein sequence, read N- to C-terminus: Kinesin-like protein KIF20A (890 aa).

Ser2 is subject to N-acetylserine. 3 positions are modified to phosphoserine: Ser7, Ser14, and Ser21. One can recognise a Kinesin motor domain in the interval 64 to 507 (KVKVYLRVRP…AKFSAIASQL (444 aa)). An ATP-binding site is contributed by 160-167 (GVTNSGKT). Ser528 carries the phosphoserine; by PLK1 modification. Phosphoserine is present on residues Ser532, Ser662, Ser668, Ser685, and Ser825. Residues 611-762 (LDTQKELLEE…ESLQSAERAC (152 aa)) adopt a coiled-coil conformation. Positions 763–890 (CHSTGAGKLR…LKSGPFGKKY (128 aa)) are globular. Positions 832-865 (TNQENQQPNQQPPGKKPFLRNLLPRTPTCQSSTD) are disordered. Thr857 is modified (phosphothreonine). Phosphoserine is present on residues Ser867, Ser878, and Ser883.

Belongs to the TRAFAC class myosin-kinesin ATPase superfamily. Kinesin family. In terms of processing, phosphorylated by PLK1 at Ser-528 during mitosis, creating a docking site for PLK1 and recruiting PLK1 at central spindle.

The protein localises to the golgi apparatus. The protein resides in the cytoplasm. Its subcellular location is the cytoskeleton. It localises to the spindle. Its function is as follows. Mitotic kinesin required for chromosome passenger complex (CPC)-mediated cytokinesis. Following phosphorylation by PLK1, involved in recruitment of PLK1 to the central spindle. Interacts with guanosine triphosphate (GTP)-bound forms of RAB6A and RAB6B. May act as a motor required for the retrograde RAB6 regulated transport of Golgi membranes and associated vesicles along microtubules. Has a microtubule plus end-directed motility. The chain is Kinesin-like protein KIF20A (KIF20A) from Homo sapiens (Human).